Consider the following 224-residue polypeptide: Urease accessory protein UreF (224 aa).

The protein belongs to the UreF family. UreD, UreF and UreG form a complex that acts as a GTP-hydrolysis-dependent molecular chaperone, activating the urease apoprotein by helping to assemble the nickel containing metallocenter of UreC. The UreE protein probably delivers the nickel.

It localises to the cytoplasm. In terms of biological role, required for maturation of urease via the functional incorporation of the urease nickel metallocenter. In Pseudomonas putida (strain W619), this protein is Urease accessory protein UreF.